A 324-amino-acid polypeptide reads, in one-letter code: MWALDFLLSFLLIQLAAQVDSSGTWCYDSQDPKCGPAHWKELAPACGGPTQSPINIDLRLVQRDYTLKPFIFQGYDSAPQDPWVLENDGHTVLLRVNSCQQNCPAIRGAGLPSPEYRLLQLHFHWGSPGHQGSEHSLDEKHGSMEMHMVHMNTKYQSMEDARSQPDGFAILAVLLVEEDRDNTNFSAIVSGLKNLSSPGVAVNLTSTFALASLLPSALRLLRYYRYSGSLTTPGCEPAVLWTVFENTVPIGHAQVVQFQAVLQTGPPGLHPRPLTSNFRPQQPLGGRRISASPEASVRSSVSTLPCLHLALVGLGVGLRLWQGP.

Residues M1–Q18 form the signal peptide. An Alpha-carbonic anhydrase domain is found at G23–P293. The active-site Proton acceptor is H90. Residues H122, H124, and H147 each contribute to the Zn(2+) site. Residue Y155 is part of the active site. 3 N-linked (GlcNAc...) asparagine glycosylation sites follow: N184, N194, and N203. Substrate is bound at residue T231–T232. The segment at L269–S290 is disordered.

The protein belongs to the alpha-carbonic anhydrase family. Requires Zn(2+) as cofactor.

It localises to the secreted. It carries out the reaction hydrogencarbonate + H(+) = CO2 + H2O. Repressed by coumarins. Reversible hydration of carbon dioxide. This chain is Carbonic anhydrase 15 (Ca15), found in Mus musculus (Mouse).